The primary structure comprises 832 residues: Protein P (832 aa).

The tract at residues 1–177 (MPLSYQHFRK…FCGSPYSWEQ (177 aa)) is terminal protein domain (TP). The segment at 178-335 (ELQHGAESFH…YCLSHIVNLL (158 aa)) is spacer. A compositionally biased stretch (polar residues) spans 186-206 (FHQQSSGILSRPSVGSSLQSK). Disordered stretches follow at residues 186 to 255 (FHQQ…GHNA) and 280 to 305 (TSEN…RSQS). Residues 210 to 220 (SRLGLQSQQGH) show a composition bias toward low complexity. Residues 336 to 679 (EDWGPCAEHG…YLNLYPVARQ (344 aa)) form a polymerase/reverse transcriptase domain (RT) region. A Reverse transcriptase domain is found at 346 to 589 (EHHIRIPRTP…YSLNFMGYVI (244 aa)). Mg(2+) contacts are provided by Asp418, Asp540, and Asp541.

It belongs to the hepadnaviridae P protein family.

It carries out the reaction DNA(n) + a 2'-deoxyribonucleoside 5'-triphosphate = DNA(n+1) + diphosphate. The catalysed reaction is Endonucleolytic cleavage to 5'-phosphomonoester.. Its activity is regulated as follows. Activated by host HSP70 and HSP40 in vitro to be able to bind the epsilon loop of the pgRNA. Because deletion of the RNase H region renders the protein partly chaperone-independent, the chaperones may be needed indirectly to relieve occlusion of the RNA-binding site by this domain. Inhibited by several reverse-transcriptase inhibitors: Lamivudine, Adefovir and Entecavir. In terms of biological role, multifunctional enzyme that converts the viral RNA genome into dsDNA in viral cytoplasmic capsids. This enzyme displays a DNA polymerase activity that can copy either DNA or RNA templates, and a ribonuclease H (RNase H) activity that cleaves the RNA strand of RNA-DNA heteroduplexes in a partially processive 3'- to 5'-endonucleasic mode. Neo-synthesized pregenomic RNA (pgRNA) are encapsidated together with the P protein, and reverse-transcribed inside the nucleocapsid. Initiation of reverse-transcription occurs first by binding the epsilon loop on the pgRNA genome, and is initiated by protein priming, thereby the 5'-end of (-)DNA is covalently linked to P protein. Partial (+)DNA is synthesized from the (-)DNA template and generates the relaxed circular DNA (RC-DNA) genome. After budding and infection, the RC-DNA migrates in the nucleus, and is converted into a plasmid-like covalently closed circular DNA (cccDNA). The activity of P protein does not seem to be necessary for cccDNA generation, and is presumably released from (+)DNA by host nuclear DNA repair machinery. This chain is Protein P, found in Hepatitis B virus genotype D subtype ayw (isolate Australia/AustKW/1991) (HBV-D).